The following is a 371-amino-acid chain: 4-hydroxy-3-methylbut-2-en-1-yl diphosphate synthase (flavodoxin) (371 aa).

[4Fe-4S] cluster is bound by residues C272, C275, C307, and E314.

The protein belongs to the IspG family. [4Fe-4S] cluster serves as cofactor.

It carries out the reaction (2E)-4-hydroxy-3-methylbut-2-enyl diphosphate + oxidized [flavodoxin] + H2O + 2 H(+) = 2-C-methyl-D-erythritol 2,4-cyclic diphosphate + reduced [flavodoxin]. It functions in the pathway isoprenoid biosynthesis; isopentenyl diphosphate biosynthesis via DXP pathway; isopentenyl diphosphate from 1-deoxy-D-xylulose 5-phosphate: step 5/6. Functionally, converts 2C-methyl-D-erythritol 2,4-cyclodiphosphate (ME-2,4cPP) into 1-hydroxy-2-methyl-2-(E)-butenyl 4-diphosphate. This chain is 4-hydroxy-3-methylbut-2-en-1-yl diphosphate synthase (flavodoxin), found in Pseudomonas aeruginosa (strain LESB58).